Consider the following 363-residue polypeptide: tRNA N6-adenosine threonylcarbamoyltransferase (363 aa).

Fe cation is bound by residues His-117 and His-121. Residues 139-143 (LVSGG), Asp-172, Gly-185, and Asn-287 each bind substrate. A Fe cation-binding site is contributed by Asp-315.

It belongs to the KAE1 / TsaD family. Fe(2+) serves as cofactor.

It localises to the cytoplasm. The enzyme catalyses L-threonylcarbamoyladenylate + adenosine(37) in tRNA = N(6)-L-threonylcarbamoyladenosine(37) in tRNA + AMP + H(+). Functionally, required for the formation of a threonylcarbamoyl group on adenosine at position 37 (t(6)A37) in tRNAs that read codons beginning with adenine. Is involved in the transfer of the threonylcarbamoyl moiety of threonylcarbamoyl-AMP (TC-AMP) to the N6 group of A37, together with TsaE and TsaB. TsaD likely plays a direct catalytic role in this reaction. This Cereibacter sphaeroides (strain ATCC 17025 / ATH 2.4.3) (Rhodobacter sphaeroides) protein is tRNA N6-adenosine threonylcarbamoyltransferase.